A 569-amino-acid polypeptide reads, in one-letter code: CTP synthase (569 aa).

Residues 1–276 are amidoligase domain; the sequence is MNQATPTKHV…DAYLVRRLDL (276 aa). Serine 18 contributes to the CTP binding site. Serine 18 is a UTP binding site. Residues 19 to 24 and aspartate 76 each bind ATP; that span reads SLGKGL. Residues aspartate 76 and glutamate 150 each contribute to the Mg(2+) site. CTP contacts are provided by residues 157 to 159, 197 to 202, and lysine 233; these read DIE and KTKPTQ. UTP contacts are provided by residues 197-202 and lysine 233; that span reads KTKPTQ. The Glutamine amidotransferase type-1 domain maps to 301-550; sequence TVALVGKYVD…VGAAIERQRE (250 aa). L-glutamine is bound at residue glycine 364. The active-site Nucleophile; for glutamine hydrolysis is cysteine 391. L-glutamine-binding positions include 392–395, glutamate 415, and arginine 476; that span reads LGLQ. Residues histidine 523 and glutamate 525 contribute to the active site.

This sequence belongs to the CTP synthase family. In terms of assembly, homotetramer.

The enzyme catalyses UTP + L-glutamine + ATP + H2O = CTP + L-glutamate + ADP + phosphate + 2 H(+). It catalyses the reaction L-glutamine + H2O = L-glutamate + NH4(+). The catalysed reaction is UTP + NH4(+) + ATP = CTP + ADP + phosphate + 2 H(+). Its pathway is pyrimidine metabolism; CTP biosynthesis via de novo pathway; CTP from UDP: step 2/2. With respect to regulation, allosterically activated by GTP, when glutamine is the substrate; GTP has no effect on the reaction when ammonia is the substrate. The allosteric effector GTP functions by stabilizing the protein conformation that binds the tetrahedral intermediate(s) formed during glutamine hydrolysis. Inhibited by the product CTP, via allosteric rather than competitive inhibition. In terms of biological role, catalyzes the ATP-dependent amination of UTP to CTP with either L-glutamine or ammonia as the source of nitrogen. Regulates intracellular CTP levels through interactions with the four ribonucleotide triphosphates. The polypeptide is CTP synthase (Nocardioides sp. (strain ATCC BAA-499 / JS614)).